The following is a 510-amino-acid chain: Secreted RxLR effector protein 108 (510 aa).

The first 20 residues, 1-20 (MRGAYYVLTALFVVTSSDIA), serve as a signal peptide directing secretion. Asn-47 carries N-linked (GlcNAc...) asparagine glycosylation. Positions 48 to 65 (RSLRGSRDGRNDLANEER) match the RxLR-dEER motif. Disordered stretches follow at residues 111–139 (RAAK…AKKT) and 386–442 (KRSR…DDPK). A compositionally biased stretch (basic residues) spans 122 to 137 (PAKAAKKTPRAAKAAK). The segment covering 393-405 (DGNTDTASLPSKQ) has biased composition (polar residues). Over residues 429-442 (VPTKEIKSSFDDPK) the composition is skewed to basic and acidic residues.

It belongs to the RxLR effector family.

The protein resides in the secreted. It is found in the host nucleus. In terms of biological role, secreted effector that completely suppresses the host cell death induced by cell death-inducing proteins. The sequence is that of Secreted RxLR effector protein 108 from Plasmopara viticola (Downy mildew of grapevine).